The primary structure comprises 402 residues: Protein indeterminate-domain 12 (402 aa).

Residues 47–66 are disordered; it reads TETHKPKKKRGLPGNPDPDA. S72 is modified (phosphoserine). C2H2-type zinc fingers lie at residues 82–104 and 124–154; these read FVCE…RRGH and YVCP…CRKH. The Nuclear localization signal signature appears at 146–153; it reads IKKHFCRK. The segment at 159–183 adopts a C2H2-type 2; degenerate zinc-finger fold; it reads WKCEKCSKFYAVQSDWKAHTKICGT. Residues C161, C164, H177, C181, C188, C190, H203, and C207 each coordinate Zn(2+). The CCHC-type 2; atypical zinc-finger motif lies at 186–209; it reads YRCDCGTLFSRKDTFITHRAFCDA. The SHR-binding stretch occupies residues 196-208; it reads RKDTFITHRAFCD.

It localises to the nucleus. Its function is as follows. Probable transcription factor. The protein is Protein indeterminate-domain 12 of Arabidopsis thaliana (Mouse-ear cress).